Consider the following 686-residue polypeptide: Translation initiation factor IF-2 (686 aa).

The disordered stretch occupies residues 54–105 (KPSVADEFEVEEKVVRSKKNSNKKKKKGKGNEDKRQENFAGRQQTQTVETPD). The segment covering 69–81 (RSKKNSNKKKKKG) has biased composition (basic residues). The tr-type G domain occupies 188–357 (ERPAVVTIMG…LLVSEVEEYK (170 aa)). The segment at 197–204 (GHVDHGKT) is G1. 197–204 (GHVDHGKT) serves as a coordination point for GTP. Residues 222–226 (GITQH) are G2. The tract at residues 243–246 (DTPG) is G3. GTP-binding positions include 243 to 247 (DTPGH) and 297 to 300 (NKMD). Positions 297–300 (NKMD) are G4. The interval 333–335 (SAI) is G5.

The protein belongs to the TRAFAC class translation factor GTPase superfamily. Classic translation factor GTPase family. IF-2 subfamily.

It is found in the cytoplasm. In terms of biological role, one of the essential components for the initiation of protein synthesis. Protects formylmethionyl-tRNA from spontaneous hydrolysis and promotes its binding to the 30S ribosomal subunits. Also involved in the hydrolysis of GTP during the formation of the 70S ribosomal complex. The polypeptide is Translation initiation factor IF-2 (Bacillus cereus (strain AH187)).